Here is a 327-residue protein sequence, read N- to C-terminus: tRNA dimethylallyltransferase (327 aa).

An ATP-binding site is contributed by 14–21 (GPTASGKT). Residue 16–21 (TASGKT) participates in substrate binding. Interaction with substrate tRNA regions lie at residues 39 to 42 (DSAL) and 163 to 167 (QRIQR).

This sequence belongs to the IPP transferase family. As to quaternary structure, monomer. The cofactor is Mg(2+).

The catalysed reaction is adenosine(37) in tRNA + dimethylallyl diphosphate = N(6)-dimethylallyladenosine(37) in tRNA + diphosphate. Catalyzes the transfer of a dimethylallyl group onto the adenine at position 37 in tRNAs that read codons beginning with uridine, leading to the formation of N6-(dimethylallyl)adenosine (i(6)A). This chain is tRNA dimethylallyltransferase, found in Xanthomonas euvesicatoria pv. vesicatoria (strain 85-10) (Xanthomonas campestris pv. vesicatoria).